Here is a 156-residue protein sequence, read N- to C-terminus: Small ribosomal subunit protein uS7 (156 aa).

The protein belongs to the universal ribosomal protein uS7 family. Part of the 30S ribosomal subunit. Contacts proteins S9 and S11.

Its function is as follows. One of the primary rRNA binding proteins, it binds directly to 16S rRNA where it nucleates assembly of the head domain of the 30S subunit. Is located at the subunit interface close to the decoding center, probably blocks exit of the E-site tRNA. This Arthrobacter sp. (strain FB24) protein is Small ribosomal subunit protein uS7.